The following is a 377-amino-acid chain: Glutamate 5-kinase (377 aa).

Lysine 20 is an ATP binding site. Substrate contacts are provided by serine 60, aspartate 147, and asparagine 159. Threonine 179–aspartate 180 serves as a coordination point for ATP. The 79-residue stretch at alanine 285–alanine 363 folds into the PUA domain.

This sequence belongs to the glutamate 5-kinase family.

Its subcellular location is the cytoplasm. It carries out the reaction L-glutamate + ATP = L-glutamyl 5-phosphate + ADP. Its pathway is amino-acid biosynthesis; L-proline biosynthesis; L-glutamate 5-semialdehyde from L-glutamate: step 1/2. Catalyzes the transfer of a phosphate group to glutamate to form L-glutamate 5-phosphate. In Acinetobacter baumannii (strain SDF), this protein is Glutamate 5-kinase.